The following is a 201-amino-acid chain: Small ribosomal subunit protein uS4c (201 aa).

An S4 RNA-binding domain is found at 89-157 (MRLDNILFRL…VQNYIASSDP (69 aa)).

Belongs to the universal ribosomal protein uS4 family. Part of the 30S ribosomal subunit. Contacts protein S5. The interaction surface between S4 and S5 is involved in control of translational fidelity.

The protein resides in the plastid. The protein localises to the chloroplast. Functionally, one of the primary rRNA binding proteins, it binds directly to 16S rRNA where it nucleates assembly of the body of the 30S subunit. Its function is as follows. With S5 and S12 plays an important role in translational accuracy. The sequence is that of Small ribosomal subunit protein uS4c (rps4) from Hordeum vulgare (Barley).